Here is a 388-residue protein sequence, read N- to C-terminus: MFIMTKYFTSESVSAGHPDKIADQIADAILDAVLAQDPYARSAVEVTTSTGDVSIFGELSTSAYVNVRQIAMDTIREIGYNQAELGFTADSVNVSNRIVEQSGDIAQAVDSADDDPEQLGAGDQGMVFGYATNETDNYLPLTLALSHRLMRQIRDVREAGTLNYLRPDAKAEVSVELDDNNQVSRIAAVVLSTQHDETVTLDQLREDVRRLVIDPVLPQELVDDETIYYINPSGRFVLGGPQADSGLTGRKIIVDTYGGAAHHGGGAFSGKDATKVDRSAAYFARYVAKNLVAAGVADKLELQVAYAIGVAQPVSLNIETFGTAKIDEDKIRDITAQLFDFRPLAIINHLDLRRPIYKQTAAFGHFGRTDIDLPWEALDQVDKIKALM.

E11 provides a ligand contact to Mg(2+). H17 serves as a coordination point for ATP. Residue E45 coordinates K(+). L-methionine contacts are provided by E58 and Q101. ATP-binding positions include 168–170, 233–236, D244, 250–251, A267, K271, and K275; these read DAK, SGRF, and RK. D244 contacts L-methionine. K275 serves as a coordination point for L-methionine.

This sequence belongs to the AdoMet synthase family. Homotetramer. The cofactor is Mn(2+). It depends on Mg(2+) as a cofactor. Co(2+) is required as a cofactor. K(+) serves as cofactor. Mostly in Roots.

Its subcellular location is the cytoplasm. It carries out the reaction L-methionine + ATP + H2O = S-adenosyl-L-methionine + phosphate + diphosphate. It participates in amino-acid biosynthesis; S-adenosyl-L-methionine biosynthesis; S-adenosyl-L-methionine from L-methionine: step 1/1. In terms of biological role, catalyzes the formation of S-adenosylmethionine from methionine and ATP. The reaction comprises two steps that are both catalyzed by the same enzyme: formation of S-adenosylmethionine (AdoMet) and triphosphate, and subsequent hydrolysis of the triphosphate. The polypeptide is S-adenosylmethionine synthase 1 (SAMS1) (Pinus contorta (Shore pine)).